A 682-amino-acid polypeptide reads, in one-letter code: Methionine--tRNA ligase (682 aa).

The 'HIGH' region motif lies at 12 to 22 (PYANGAIHLGH). Zn(2+) contacts are provided by Cys143, Cys146, Cys156, and Cys159. The 'KMSKS' region signature appears at 328–332 (KMSKS). Lys331 contributes to the ATP binding site. Residues 580-682 (DFAKLDLRVA…EGIRPGMQVK (103 aa)) form the tRNA-binding domain.

Belongs to the class-I aminoacyl-tRNA synthetase family. MetG type 1 subfamily. Homodimer. Zn(2+) serves as cofactor.

It is found in the cytoplasm. It catalyses the reaction tRNA(Met) + L-methionine + ATP = L-methionyl-tRNA(Met) + AMP + diphosphate. In terms of biological role, is required not only for elongation of protein synthesis but also for the initiation of all mRNA translation through initiator tRNA(fMet) aminoacylation. This is Methionine--tRNA ligase from Actinobacillus pleuropneumoniae serotype 7 (strain AP76).